The primary structure comprises 506 residues: Glycerol kinase (506 aa).

Residue Thr12 coordinates ADP. ATP-binding residues include Thr12, Thr13, and Ser14. Thr12 provides a ligand contact to sn-glycerol 3-phosphate. Arg16 is a binding site for ADP. Arg82, Glu83, Tyr134, and Asp246 together coordinate sn-glycerol 3-phosphate. Residues Arg82, Glu83, Tyr134, Asp246, and Gln247 each coordinate glycerol. Residues Thr268 and Gly312 each contribute to the ADP site. 4 residues coordinate ATP: Thr268, Gly312, Gln316, and Gly413. Gly413 and Asn417 together coordinate ADP.

This sequence belongs to the FGGY kinase family.

The enzyme catalyses glycerol + ATP = sn-glycerol 3-phosphate + ADP + H(+). It functions in the pathway polyol metabolism; glycerol degradation via glycerol kinase pathway; sn-glycerol 3-phosphate from glycerol: step 1/1. Its activity is regulated as follows. Inhibited by fructose 1,6-bisphosphate (FBP). In terms of biological role, key enzyme in the regulation of glycerol uptake and metabolism. Catalyzes the phosphorylation of glycerol to yield sn-glycerol 3-phosphate. This is Glycerol kinase from Leifsonia xyli subsp. xyli (strain CTCB07).